A 198-amino-acid chain; its full sequence is Recombination protein RecR (198 aa).

The C4-type zinc finger occupies 57–72; sequence CLNCGCLTDEAACYFC. The region spanning 80-175 is the Toprim domain; sequence QIICVTAFPR…QISRLAFGLP (96 aa).

This sequence belongs to the RecR family.

Its function is as follows. May play a role in DNA repair. It seems to be involved in an RecBC-independent recombinational process of DNA repair. It may act with RecF and RecO. The chain is Recombination protein RecR from Protochlamydia amoebophila (strain UWE25).